Consider the following 368-residue polypeptide: MFYWLIDLSNTVPGLSIFKPMLNVFRYITFRTGGAMVTGALFVFLFGPWIIDNLRLRQGKGQPIRADGPQSHLVSKKGTPTMGGLMILSGLVVSTVLWANPLNPYVWIVLAVTLGFGFIGFYDDYLKVTKQTHAGFAGRTRLLLELLIALAACYALIRLGREPFSTALVIPFFKDVVVDLGWFFLAFGAFIIVGAGNAVNLTDGLDGLAIVPVMIAAASFGMIAYLAGNAVFADYLQINYIAGTGELAVLCGAVLGAGLGFLWFNAPPASIFMGDTGSLALGGMLGSIAVAVKHEIVLAVIGGLFVLEAVSVIVQVASFKLTGKRIFKMAPIHHHFEQLGWTEPQIVIRFWIISVMLALAGLSTLKLR.

Helical transmembrane passes span Thr32–Asp52, Thr79–Ala99, Leu102–Tyr122, Thr140–Gly160, Val176–Gly196, Gly207–Ala227, Leu247–Pro267, Ile271–Ala291, Ile296–Val316, and Gln345–Leu365.

The protein belongs to the glycosyltransferase 4 family. MraY subfamily. Requires Mg(2+) as cofactor.

Its subcellular location is the cell inner membrane. The catalysed reaction is UDP-N-acetyl-alpha-D-muramoyl-L-alanyl-gamma-D-glutamyl-meso-2,6-diaminopimeloyl-D-alanyl-D-alanine + di-trans,octa-cis-undecaprenyl phosphate = di-trans,octa-cis-undecaprenyl diphospho-N-acetyl-alpha-D-muramoyl-L-alanyl-D-glutamyl-meso-2,6-diaminopimeloyl-D-alanyl-D-alanine + UMP. Its pathway is cell wall biogenesis; peptidoglycan biosynthesis. Catalyzes the initial step of the lipid cycle reactions in the biosynthesis of the cell wall peptidoglycan: transfers peptidoglycan precursor phospho-MurNAc-pentapeptide from UDP-MurNAc-pentapeptide onto the lipid carrier undecaprenyl phosphate, yielding undecaprenyl-pyrophosphoryl-MurNAc-pentapeptide, known as lipid I. This Nitrobacter hamburgensis (strain DSM 10229 / NCIMB 13809 / X14) protein is Phospho-N-acetylmuramoyl-pentapeptide-transferase.